A 121-amino-acid polypeptide reads, in one-letter code: Large ribosomal subunit protein uL14 (121 aa).

The protein belongs to the universal ribosomal protein uL14 family. Part of the 50S ribosomal subunit. Forms a cluster with proteins L3 and L19. In the 70S ribosome, L14 and L19 interact and together make contacts with the 16S rRNA in bridges B5 and B8.

Its function is as follows. Binds to 23S rRNA. Forms part of two intersubunit bridges in the 70S ribosome. The protein is Large ribosomal subunit protein uL14 of Synechococcus sp. (strain RCC307).